Reading from the N-terminus, the 375-residue chain is AT-rich binding protein (375 aa).

A C2H2-type 1 zinc finger spans residues 29 to 52 (IVCHTCQEELQTQDQFWKHIQDEH). A compositionally biased stretch (basic and acidic residues) spans 110–119 (DDQREMDIHE). Residues 110–142 (DDQREMDIHEAQQQQHQQQQQHQQQQQLQQQQQ) are disordered. The span at 121–142 (QQQQHQQQQQHQQQQQLQQQQQ) shows a compositional bias: low complexity. 2 consecutive C2H2-type zinc fingers follow at residues 308-332 (YICD…RVVH) and 338-361 (FNCE…KKKH).

The protein resides in the nucleus. In terms of biological role, may be a transcription factor for genes having (A+T) stretches in their promoter and/or enhancer regions. Binds to AT rich DNA. The sequence is that of AT-rich binding protein from Drosophila pseudoobscura pseudoobscura (Fruit fly).